A 292-amino-acid chain; its full sequence is Cyclin-dependent-like kinase 5 (292 aa).

One can recognise a Protein kinase domain in the interval 4-286 (YEKLEKIGEG…ADEALQHPYF (283 aa)). ATP is bound by residues 10–18 (IGEGTYGTV) and Lys33. The residue at position 14 (Thr14) is a Phosphothreonine. Tyr15 carries the post-translational modification Phosphotyrosine. Residue Thr17 is modified to Phosphothreonine. Position 46 is a phosphoserine (Ser46). Lys56 carries the post-translational modification N6-acetyllysine. A Phosphoserine modification is found at Ser72. Asp126 acts as the Proton acceptor in catalysis. Ser159 carries the phosphoserine modification. Position 239 is a phosphotyrosine (Tyr239).

It belongs to the protein kinase superfamily. CMGC Ser/Thr protein kinase family. CDC2/CDKX subfamily.

Its subcellular location is the nucleus. It is found in the cytoplasm. The protein resides in the cell membrane. It localises to the perikaryon. The protein localises to the cell projection. Its subcellular location is the growth cone. It is found in the lamellipodium. The protein resides in the postsynaptic density. It catalyses the reaction L-seryl-[protein] + ATP = O-phospho-L-seryl-[protein] + ADP + H(+). It carries out the reaction L-threonyl-[protein] + ATP = O-phospho-L-threonyl-[protein] + ADP + H(+). In terms of biological role, proline-directed serine/threonine-protein kinase essential for neuronal cell cycle arrest and differentiation and may be involved in apoptotic cell death in neuronal diseases by triggering abortive cell cycle re-entry. Interacts with D1 and D3-type G1 cyclins. Regulates several neuronal development and physiological processes including neuronal survival, migration and differentiation, axonal and neurite growth, synaptogenesis, oligodendrocyte differentiation, synaptic plasticity and neurotransmission, by phosphorylating key proteins. In the mature central nervous system (CNS), regulates neurotransmitter movements by phosphorylating substrates associated with neurotransmitter release and synapse plasticity; synaptic vesicle exocytosis, vesicles fusion with the presynaptic membrane, and endocytosis. May regulate endothelial cell migration and angiogenesis via the modulation of lamellipodia formation. The complex p35/CDK5 may participate in the regulation of the circadian clock. The polypeptide is Cyclin-dependent-like kinase 5 (cdk5) (Xenopus laevis (African clawed frog)).